Consider the following 130-residue polypeptide: S-adenosylmethionine decarboxylase proenzyme (130 aa).

The active-site Schiff-base intermediate with substrate; via pyruvic acid is the Ser64. Ser64 bears the Pyruvic acid (Ser); by autocatalysis mark. The active-site Proton acceptor; for processing activity is the His69. Cys84 (proton donor; for catalytic activity) is an active-site residue.

It belongs to the prokaryotic AdoMetDC family. Type 1 subfamily. As to quaternary structure, heterotetramer of two alpha and two beta chains arranged as a dimer of alpha/beta heterodimers. The cofactor is pyruvate. In terms of processing, is synthesized initially as an inactive proenzyme. Formation of the active enzyme involves a self-maturation process in which the active site pyruvoyl group is generated from an internal serine residue via an autocatalytic post-translational modification. Two non-identical subunits are generated from the proenzyme in this reaction, and the pyruvate is formed at the N-terminus of the alpha chain, which is derived from the carboxyl end of the proenzyme. The post-translation cleavage follows an unusual pathway, termed non-hydrolytic serinolysis, in which the side chain hydroxyl group of the serine supplies its oxygen atom to form the C-terminus of the beta chain, while the remainder of the serine residue undergoes an oxidative deamination to produce ammonia and the pyruvoyl group blocking the N-terminus of the alpha chain.

It carries out the reaction S-adenosyl-L-methionine + H(+) = S-adenosyl 3-(methylsulfanyl)propylamine + CO2. It functions in the pathway amine and polyamine biosynthesis; S-adenosylmethioninamine biosynthesis; S-adenosylmethioninamine from S-adenosyl-L-methionine: step 1/1. Catalyzes the decarboxylation of S-adenosylmethionine to S-adenosylmethioninamine (dcAdoMet), the propylamine donor required for the synthesis of the polyamines spermine and spermidine from the diamine putrescine. The chain is S-adenosylmethionine decarboxylase proenzyme from Thermoplasma volcanium (strain ATCC 51530 / DSM 4299 / JCM 9571 / NBRC 15438 / GSS1).